The primary structure comprises 204 residues: ATP-dependent Clp protease proteolytic subunit (204 aa).

Serine 101 (nucleophile) is an active-site residue. The active site involves histidine 126.

It belongs to the peptidase S14 family. Component of the chloroplastic Clp protease core complex.

The protein localises to the plastid. The protein resides in the chloroplast stroma. It catalyses the reaction Hydrolysis of proteins to small peptides in the presence of ATP and magnesium. alpha-casein is the usual test substrate. In the absence of ATP, only oligopeptides shorter than five residues are hydrolyzed (such as succinyl-Leu-Tyr-|-NHMec, and Leu-Tyr-Leu-|-Tyr-Trp, in which cleavage of the -Tyr-|-Leu- and -Tyr-|-Trp bonds also occurs).. Functionally, cleaves peptides in various proteins in a process that requires ATP hydrolysis. Has a chymotrypsin-like activity. Plays a major role in the degradation of misfolded proteins. This chain is ATP-dependent Clp protease proteolytic subunit, found in Anthoceros angustus (Hornwort).